We begin with the raw amino-acid sequence, 212 residues long: Uridine kinase (212 aa).

13-20 (GASASGKS) serves as a coordination point for ATP.

Belongs to the uridine kinase family.

It is found in the cytoplasm. It catalyses the reaction uridine + ATP = UMP + ADP + H(+). It carries out the reaction cytidine + ATP = CMP + ADP + H(+). Its pathway is pyrimidine metabolism; CTP biosynthesis via salvage pathway; CTP from cytidine: step 1/3. It participates in pyrimidine metabolism; UMP biosynthesis via salvage pathway; UMP from uridine: step 1/1. The sequence is that of Uridine kinase from Psychromonas ingrahamii (strain DSM 17664 / CCUG 51855 / 37).